The primary structure comprises 442 residues: UDP-glucosyltransferase 29 (442 aa).

The active-site Proton acceptor is H20. H20 provides a ligand contact to an anthocyanidin. Residue D116 is the Charge relay of the active site. Positions 138, 318, 320, 335, 338, 340, 343, 359, and 360 each coordinate UDP-alpha-D-glucose.

Belongs to the UDP-glycosyltransferase family. In terms of tissue distribution, expressed at higher levels in roots than in leaves.

It catalyses the reaction (20S)-ginsenoside F2 + UDP-alpha-D-glucose = (20S)-ginsenoside Rd + UDP + H(+). The catalysed reaction is (20S)-ginsenoside Rh2 + UDP-alpha-D-glucose = (20S)-ginsenoside Rg3 + UDP + H(+). It participates in secondary metabolite biosynthesis; terpenoid biosynthesis. Functionally, component of the dammarane-type triterpene saponins (e.g. PPD-type ginsenosides or panaxosides) biosynthetic pathway. Glycosyltransferase that catalyzes the conversion of ginsenoside Rh2 to ginsenoside Rg3. Triggers the biosynthesis of ginsenoside Rd from ginsenoside F2. The chain is UDP-glucosyltransferase 29 from Panax ginseng (Korean ginseng).